Reading from the N-terminus, the 201-residue chain is Recombination protein RecR (201 aa).

A C4-type zinc finger spans residues 57–72 (CADCRTFTEQDVCNIC). Positions 81–176 (GQICVVESPA…EASRIAHGVP (96 aa)) constitute a Toprim domain.

The protein belongs to the RecR family.

In terms of biological role, may play a role in DNA repair. It seems to be involved in an RecBC-independent recombinational process of DNA repair. It may act with RecF and RecO. This Citrobacter koseri (strain ATCC BAA-895 / CDC 4225-83 / SGSC4696) protein is Recombination protein RecR.